A 259-amino-acid polypeptide reads, in one-letter code: UPF0246 protein NMCC_0856 (259 aa).

The protein belongs to the UPF0246 family.

In Neisseria meningitidis serogroup C (strain 053442), this protein is UPF0246 protein NMCC_0856.